Here is a 494-residue protein sequence, read N- to C-terminus: Maintenance of mitochondrial morphology protein 1 (494 aa).

Topologically, residues 1–22 are lumenal; sequence MSSQPGDPATLPAQSSLSFTQG. A helical membrane pass occupies residues 23–43; that stretch reads FLLGQLSVVLVLAAFIKFFIF. Residues 44–494 lie on the Cytoplasmic side of the membrane; sequence GEAPPPPSRG…GSLPEAVTPG (451 aa). 4 disordered regions span residues 50–98, 274–330, 398–426, and 449–494; these read PSRG…SSST, PPLD…KSNV, VRTG…ARHE, and VASR…VTPG. Positions 54-64 are enriched in basic residues; it reads LSHRSATHRRS. Polar residues-rich tracts occupy residues 65–76 and 85–98; these read NSIYSNSPQEAG and STSN…SSST. The SMP-LTD domain maps to 130–387; the sequence is QPESLDWFNV…EPRVQVVGLP (258 aa). Over residues 274-286 the composition is skewed to pro residues; it reads PPLDTPSHSPSPP. 2 stretches are compositionally biased toward polar residues: residues 406–416 and 466–477; these read TASNGPRSTVS and RSMTRQESSGDL.

The protein belongs to the MMM1 family. In terms of assembly, homodimer. Component of the ER-mitochondria encounter structure (ERMES) or MDM complex, composed of mmm1, mdm10, mdm12 and mdm34. A mmm1 homodimer associates with one molecule of mdm12 on each side in a pairwise head-to-tail manner, and the SMP-LTD domains of mmm1 and mdm12 generate a continuous hydrophobic tunnel for phospholipid trafficking.

It is found in the endoplasmic reticulum membrane. Component of the ERMES/MDM complex, which serves as a molecular tether to connect the endoplasmic reticulum (ER) and mitochondria. Components of this complex are involved in the control of mitochondrial shape and protein biogenesis, and function in nonvesicular lipid trafficking between the ER and mitochondria. The mdm12-mmm1 subcomplex functions in the major beta-barrel assembly pathway that is responsible for biogenesis of all outer membrane beta-barrel proteins, and acts in a late step after the SAM complex. The mdm10-mdm12-mmm1 subcomplex further acts in the TOM40-specific pathway after the action of the mdm12-mmm1 complex. Essential for establishing and maintaining the structure of mitochondria and maintenance of mtDNA nucleoids. In Aspergillus clavatus (strain ATCC 1007 / CBS 513.65 / DSM 816 / NCTC 3887 / NRRL 1 / QM 1276 / 107), this protein is Maintenance of mitochondrial morphology protein 1.